The primary structure comprises 401 residues: Imidazolonepropionase (401 aa).

2 residues coordinate Fe(3+): H66 and H68. Residues H66 and H68 each contribute to the Zn(2+) site. Positions 75, 138, and 171 each coordinate 4-imidazolone-5-propanoate. Y138 contacts N-formimidoyl-L-glutamate. Fe(3+) is bound at residue H236. A Zn(2+)-binding site is contributed by H236. Q239 lines the 4-imidazolone-5-propanoate pocket. Residue D311 coordinates Fe(3+). D311 provides a ligand contact to Zn(2+). Residues N313 and G315 each coordinate N-formimidoyl-L-glutamate. T316 contributes to the 4-imidazolone-5-propanoate binding site.

It belongs to the metallo-dependent hydrolases superfamily. HutI family. It depends on Zn(2+) as a cofactor. Requires Fe(3+) as cofactor.

It is found in the cytoplasm. The enzyme catalyses 4-imidazolone-5-propanoate + H2O = N-formimidoyl-L-glutamate. The protein operates within amino-acid degradation; L-histidine degradation into L-glutamate; N-formimidoyl-L-glutamate from L-histidine: step 3/3. Catalyzes the hydrolytic cleavage of the carbon-nitrogen bond in imidazolone-5-propanoate to yield N-formimidoyl-L-glutamate. It is the third step in the universal histidine degradation pathway. The sequence is that of Imidazolonepropionase from Acinetobacter baumannii (strain ACICU).